The following is a 428-amino-acid chain: E3 ubiquitin-protein ligase RNF128 (428 aa).

The first 38 residues, 1–38, serve as a signal peptide directing secretion; it reads MGPPLGAGVSCRGGCGSSRLLAWCFLLALSPQAPGSRG. Residues N48, N59, and N101 are each glycosylated (N-linked (GlcNAc...) asparagine). Residues 75–183 enclose the PA domain; it reads SPLEPVAGVL…LKGTKILQSI (109 aa). A helical membrane pass occupies residues 208-228; the sequence is IFFVSVSFFIITAATVGYFIF. The RING-type; atypical zinc-finger motif lies at 277 to 318; it reads CAVCIELYKPNDLVRILTCNHIFHKTCVDPWLLEHRTCPMCK. Residues 346–428 are disordered; that stretch reads ISNSASSHEE…QETAVREIKS (83 aa). Basic and acidic residues predominate over residues 416-428; that stretch reads TPHQETAVREIKS.

In terms of processing, auto-ubiquitinated. Controls the development of T-cell clonal anergy by ubiquitination.

The protein resides in the cytoplasm. The protein localises to the endomembrane system. Its subcellular location is the cytoskeleton. It localises to the perinuclear region. The enzyme catalyses S-ubiquitinyl-[E2 ubiquitin-conjugating enzyme]-L-cysteine + [acceptor protein]-L-lysine = [E2 ubiquitin-conjugating enzyme]-L-cysteine + N(6)-ubiquitinyl-[acceptor protein]-L-lysine.. The protein operates within protein modification; protein ubiquitination. Its function is as follows. E3 ubiquitin-protein ligase that catalyzes 'Lys-27', 'Lys-48'- or 'Lys-63'-linked polyubiquitin chains formation and plays a role in different biological processes such as modulation of immune response, cytoskeletal dynamics or protein homeostasis. Inhibits IL2 and IL4 transcription, thereby playing an important role in the induction of the anergic phenotype, a long-term stable state of T-lymphocyte unresponsiveness to antigenic stimulation associated with the blockade of interleukin production. Ubiquitinates ARPC5 with 'Lys-48' linkages and COR1A with 'Lys-63' linkages leading to their degradation, down-regulation of these cytoskeletal components results in impaired lamellipodium formation and reduced accumulation of F-actin at the immunological synapse. Functions in the patterning of the dorsal ectoderm; sensitizes ectoderm to respond to neural-inducing signals. Plays a positive role in innate immune response by promoting 'Lys-63'-linked ubiquitination of TBK1 after RNA- or DNA-virus infection. Regulates alveolar macrophage activation and neutrophil infiltration by interacting with TLR4, targeting it for degradation, and inhibiting NF-kappa-B activation, hence decreasing pro-inflammatory cytokines. Negatively regulates the IL-3/STAT5 signaling pathway by facilitating 'Lys-27'-linked polyubiquitination of IL3RA leading to its degradation via lysosomal pathway. Directly regulates the N-glycosylation process in the endoplasmic reticulum by targeting the glycosyl-transferase RPN1 for ubiquitination and degradation. Other substrates targeted for degradation by RNF128 include transmembrane proteins CD40L, CD83 or the tetraspanin CD151. This is E3 ubiquitin-protein ligase RNF128 (RNF128) from Pongo abelii (Sumatran orangutan).